The primary structure comprises 449 residues: Tubulin alpha-1C chain (449 aa).

The MREC motif signature appears at 1–4 (MREC). Residue Q11 participates in GTP binding. K40 is subject to N6-acetyllysine. E71, S140, G144, T145, T179, N206, and N228 together coordinate GTP. A Mg(2+)-binding site is contributed by E71. E254 is a catalytic residue. Y282 is subject to 3'-nitrotyrosine. Y432 is subject to Phosphotyrosine. S439 is subject to Phosphoserine. Y449 carries the 3'-nitrotyrosine modification.

The protein belongs to the tubulin family. In terms of assembly, dimer of alpha and beta chains. A typical microtubule is a hollow water-filled tube with an outer diameter of 25 nm and an inner diameter of 15 nM. Alpha-beta heterodimers associate head-to-tail to form protofilaments running lengthwise along the microtubule wall with the beta-tubulin subunit facing the microtubule plus end conferring a structural polarity. Microtubules usually have 13 protofilaments but different protofilament numbers can be found in some organisms and specialized cells. Mg(2+) serves as cofactor. Some glutamate residues at the C-terminus are polyglycylated, resulting in polyglycine chains on the gamma-carboxyl group. Glycylation is mainly limited to tubulin incorporated into axonemes (cilia and flagella) whereas glutamylation is prevalent in neuronal cells, centrioles, axonemes, and the mitotic spindle. Both modifications can coexist on the same protein on adjacent residues, and lowering polyglycylation levels increases polyglutamylation, and reciprocally. Cilia and flagella glycylation is required for their stability and maintenance. Flagella glycylation controls sperm motility. Post-translationally, some glutamate residues at the C-terminus are polyglutamylated, resulting in polyglutamate chains on the gamma-carboxyl group. Polyglutamylation plays a key role in microtubule severing by spastin (SPAST). SPAST preferentially recognizes and acts on microtubules decorated with short polyglutamate tails: severing activity by SPAST increases as the number of glutamates per tubulin rises from one to eight, but decreases beyond this glutamylation threshold. Glutamylation is also involved in cilia motility. In terms of processing, acetylation of alpha chains at Lys-40 is located inside the microtubule lumen. This modification has been correlated with increased microtubule stability, intracellular transport and ciliary assembly. Methylation of alpha chains at Lys-40 is found in mitotic microtubules and is required for normal mitosis and cytokinesis contributing to genomic stability. Post-translationally, nitration of Tyr-449 is irreversible and interferes with normal dynein intracellular distribution. In terms of processing, undergoes a tyrosination/detyrosination cycle, the cyclic removal and re-addition of a C-terminal tyrosine residue by the enzymes tubulin tyrosine carboxypeptidase (MATCAP1, VASH1 or VASH2) and tubulin tyrosine ligase (TTL), respectively. Tyrosination promotes microtubule interaction with CAP-Gly domain-containing proteins such as CLIP1, CLIP2 and DCTN1. Tyrosination regulates the initiation of dynein-dynactin motility via interaction with DCTN1, which brings the dynein-dynactin complex into contact with microtubules. In neurons, tyrosinated tubulins mediate the initiation of retrograde vesicle transport. Post-translationally, detyrosination is involved in metaphase plate congression by guiding chromosomes during mitosis: detyrosination promotes interaction with CENPE, promoting pole-proximal transport of chromosomes toward the equator. Detyrosination increases microtubules-dependent mechanotransduction in dystrophic cardiac and skeletal muscle. In cardiomyocytes, detyrosinated microtubules are required to resist to contractile compression during contraction: detyrosination promotes association with desmin (DES) at force-generating sarcomeres, leading to buckled microtubules and mechanical resistance to contraction. In terms of tissue distribution, minor alpha-tubulin expressed in all tissues.

The protein localises to the cytoplasm. The protein resides in the cytoskeleton. The catalysed reaction is GTP + H2O = GDP + phosphate + H(+). Functionally, tubulin is the major constituent of microtubules, a cylinder consisting of laterally associated linear protofilaments composed of alpha- and beta-tubulin heterodimers. Microtubules grow by the addition of GTP-tubulin dimers to the microtubule end, where a stabilizing cap forms. Below the cap, tubulin dimers are in GDP-bound state, owing to GTPase activity of alpha-tubulin. The sequence is that of Tubulin alpha-1C chain (Tuba1c) from Mus musculus (Mouse).